The chain runs to 136 residues: Keratin-associated protein 15-1 (136 aa).

Belongs to the PMG family. In terms of assembly, interacts with hair keratins.

Functionally, in the hair cortex, hair keratin intermediate filaments are embedded in an interfilamentous matrix, consisting of hair keratin-associated proteins (KRTAP), which are essential for the formation of a rigid and resistant hair shaft through their extensive disulfide bond cross-linking with abundant cysteine residues of hair keratins. The matrix proteins include the high-sulfur and high-glycine-tyrosine keratins. This Capra hircus (Goat) protein is Keratin-associated protein 15-1 (KRTAP15-1).